The primary structure comprises 181 residues: ADP-ribosylation factor 1 (181 aa).

G2 is lipidated: N-myristoyl glycine. GTP is bound by residues 25–32 (LDGAGKTT), T48, G70, 126–129 (NKQD), and 160–161 (AT). Residue K127 forms a Glycyl lysine isopeptide (Lys-Gly) (interchain with G-Cter in ubiquitin) linkage.

This sequence belongs to the small GTPase superfamily. Arf family. Interacts with RUD3. Interacts with VPS13 (via C-terminal part); the interaction is direct.

It is found in the golgi apparatus. It carries out the reaction GTP + H2O = GDP + phosphate + H(+). In terms of biological role, GTP-binding protein involved in Golgi vesicle trafficking. May modulate vesicle budding and uncoating within the Golgi apparatus. May recruit the lipid transfer protein VPS13 to Golgi membranes. Recruits polyadenylate-binding protein PAB1 to COPI vesicles, and this is required for correct localization of the asymmetrically distributed ASH1 mRNA. The chain is ADP-ribosylation factor 1 (ARF1) from Saccharomyces cerevisiae (strain ATCC 204508 / S288c) (Baker's yeast).